A 310-amino-acid polypeptide reads, in one-letter code: Cytosolic Fe-S cluster assembly factor Nubp1 homolog (310 aa).

[4Fe-4S] cluster-binding residues include C9, C23, C26, and C32. Position 63–70 (63–70) interacts with ATP; the sequence is GKGGVGKS. [4Fe-4S] cluster contacts are provided by C240 and C243.

This sequence belongs to the Mrp/NBP35 ATP-binding proteins family. NUBP1/NBP35 subfamily. Heterotetramer of 2 Nubp1 and 2 Nubp2 chains. [4Fe-4S] cluster is required as a cofactor.

Its subcellular location is the cytoplasm. In terms of biological role, component of the cytosolic iron-sulfur (Fe/S) protein assembly (CIA) machinery. Required for maturation of extramitochondrial Fe-S proteins. The Nubp1-Nubp2 heterotetramer forms a Fe-S scaffold complex, mediating the de novo assembly of an Fe-S cluster and its transfer to target apoproteins. This Drosophila mojavensis (Fruit fly) protein is Cytosolic Fe-S cluster assembly factor Nubp1 homolog.